The sequence spans 190 residues: Large ribosomal subunit protein bL25 (190 aa).

Belongs to the bacterial ribosomal protein bL25 family. CTC subfamily. Part of the 50S ribosomal subunit; part of the 5S rRNA/L5/L18/L25 subcomplex. Contacts the 5S rRNA. Binds to the 5S rRNA independently of L5 and L18.

Functionally, this is one of the proteins that binds to the 5S RNA in the ribosome where it forms part of the central protuberance. The chain is Large ribosomal subunit protein bL25 from Neisseria meningitidis serogroup A / serotype 4A (strain DSM 15465 / Z2491).